The primary structure comprises 396 residues: Inhibitory POU protein (396 aa).

The POU-IV box motif lies at 86 to 95 (RAEALAAVDI). Positions 222–299 (DTDTDPRELE…ILQAWLEEAE (78 aa)) constitute a POU-specific domain. A disordered region spans residues 302–328 (AKNKRRDPDAPSVLPAGEKKRKRTSIA). Positions 320–377 (KKRKRTSIAAPEKRSLEAYFAVQPRPSGEKIAAIAEKLDLKKNVVRVWFCNQRQKQKR) form a DNA-binding region, homeobox; atypical.

Belongs to the POU transcription factor family. Class-4 subfamily. In terms of tissue distribution, coexpressed with vvl in overlapping subsets of neurons in the embryonic central nervous system. Expressed in olfactory neurons.

It localises to the nucleus. In terms of biological role, modulates gene transcription; simultaneously generates both a specific activator and an inhibitor of gene transcription, capable of modulating two distinct regulatory programs during neural development. Has a role in olfactory behavior. This chain is Inhibitory POU protein (acj6), found in Drosophila melanogaster (Fruit fly).